The sequence spans 1020 residues: X-linked retinitis pigmentosa GTPase regulator (1020 aa).

RCC1 repeat units follow at residues 54 to 105 (NKLY…STEG), 106 to 158 (GNVY…LTED), 159 to 208 (GRLF…VTTD), 209 to 261 (GELY…LTEN), 262 to 313 (AVYT…ITDI), and 314 to 367 (GLMY…FAAP). A phosphoserine mark is found at Ser-418 and Ser-518. Disordered regions lie at residues 609–776 (HENN…IISK), 790–906 (EIPE…KEKA), and 989–1020 (DNKD…CTIL). Composition is skewed to basic and acidic residues over residues 618 to 636 (LDAK…QKES), 644 to 665 (EKET…EKST), 685 to 698 (EENK…ESCK), 704 to 715 (DSERESVEKPDS), 760 to 771 (KLIEQGNEKETK), 790 to 802 (EIPE…EDSK), 816 to 853 (ENVK…LKLE), and 883 to 906 (SKTE…KEKA). Polar residues predominate over residues 996-1009 (NHMSQNHQNIPPTN). Cys-1017 carries the cysteine methyl ester modification. Residue Cys-1017 is the site of S-geranylgeranyl cysteine attachment. A propeptide spans 1018 to 1020 (TIL) (removed in mature form).

As to quaternary structure, interacts with SPATA7. Interacts with CEP290. Interacts with WHRN. Interacts with PDE6D. Interacts with RPGRIP1. Interacts with RPGRIP1L. PDE6D, RPGRIP1 and RPGRIP1L may compete for the same binding sites. Interacts with RAB37 and RAB8A (in GDP-bound forms); functions as GEF for RAB37 and RAB8A. In terms of assembly, isoform 6 interacts with NPM1 (via C-terminus). Isoform 6 interacts with SMC1A and SMC3. In terms of processing, prenylated. As to expression, heart, brain, placenta, lung, liver, muscle, kidney, retina, pancreas and fetal retinal pigment epithelium. Isoform 3 is found only in the retina. Colocalizes with RPGRIP1 in the outer segment of rod photoreceptors and cone outer segments.

The protein localises to the cytoplasm. The protein resides in the cytoskeleton. It is found in the flagellum axoneme. It localises to the golgi apparatus. Its subcellular location is the cell projection. The protein localises to the cilium. The protein resides in the microtubule organizing center. It is found in the centrosome. It localises to the cilium basal body. Its subcellular location is the cilium axoneme. Functionally, acts as a guanine-nucleotide releasing factor (GEF) for RAB8A and RAB37 by promoting the conversion of inactive RAB-GDP to the active form RAB-GTP. GEF activity towards RAB8A may facilitate ciliary trafficking by modulating ciliary intracellular localization of RAB8A. GEF activity towards RAB37 maintains autophagic homeostasis and retinal function. Involved in photoreceptor integrity. May control cilia formation by regulating actin stress filaments and cell contractility. May be involved in microtubule organization and regulation of transport in primary cilia. May play a critical role in spermatogenesis and in intraflagellar transport processes. In Homo sapiens (Human), this protein is X-linked retinitis pigmentosa GTPase regulator.